The following is a 191-amino-acid chain: Inosine triphosphate pyrophosphatase (191 aa).

An ITP-binding site is contributed by threonine 9–lysine 14. Glutamate 39 serves as a coordination point for Mg(2+). Residues lysine 51, aspartate 67 to threonine 68, lysine 84, phenylalanine 143 to aspartate 146, lysine 166, and histidine 171 to arginine 172 contribute to the ITP site.

This sequence belongs to the HAM1 NTPase family. Homodimer. The cofactor is Mg(2+). Mn(2+) is required as a cofactor.

The protein resides in the cytoplasm. The catalysed reaction is ITP + H2O = IMP + diphosphate + H(+). The enzyme catalyses dITP + H2O = dIMP + diphosphate + H(+). It catalyses the reaction XTP + H2O = XMP + diphosphate + H(+). Pyrophosphatase that hydrolyzes non-canonical purine nucleotides such as inosine triphosphate (ITP), deoxyinosine triphosphate (dITP) or xanthosine 5'-triphosphate (XTP) to their respective monophosphate derivatives. The enzyme does not distinguish between the deoxy- and ribose forms. Probably excludes non-canonical purines from RNA and DNA precursor pools, thus preventing their incorporation into RNA and DNA and avoiding chromosomal lesions. This Drosophila melanogaster (Fruit fly) protein is Inosine triphosphate pyrophosphatase.